The primary structure comprises 427 residues: Steroid C26-monooxygenase (427 aa).

Cys-360 is a heme binding site.

Belongs to the cytochrome P450 family. It depends on heme as a cofactor.

It catalyses the reaction cholest-4-en-3-one + 6 reduced [2Fe-2S]-[ferredoxin] + 3 O2 + 5 H(+) = (25S)-3-oxocholest-4-en-26-oate + 6 oxidized [2Fe-2S]-[ferredoxin] + 4 H2O. It participates in steroid metabolism; cholesterol degradation. Involved in the utilization of cholesterol as the sole carbon and energy source by degrading the side chain. Primarily catalyzes the sequential oxidation of the terminal methyl of cholest-4-en-3-one into (25S)-26-hydroxycholest-4-en-3-one (alcohol), (25S)-26-oxocholest-4-en-3-one (aldehyde), to finally yield the carboxylic acid (25S)-3-oxocholest-4-en-26-oate. Also able to sequentially oxidize cholesterol itself, not only cholest-4-en-3-one. The protein is Steroid C26-monooxygenase of Mycolicibacterium smegmatis (strain ATCC 700084 / mc(2)155) (Mycobacterium smegmatis).